Reading from the N-terminus, the 433-residue chain is 3-phosphoshikimate 1-carboxyvinyltransferase (433 aa).

3-phosphoshikimate contacts are provided by K21, S22, and R26. Residue K21 coordinates phosphoenolpyruvate. 2 residues coordinate phosphoenolpyruvate: G92 and R120. 3-phosphoshikimate is bound by residues S166, Q168, D317, and K344. Position 168 (Q168) interacts with phosphoenolpyruvate. The active-site Proton acceptor is the D317. 2 residues coordinate phosphoenolpyruvate: R348 and R391.

It belongs to the EPSP synthase family. In terms of assembly, monomer.

Its subcellular location is the cytoplasm. The catalysed reaction is 3-phosphoshikimate + phosphoenolpyruvate = 5-O-(1-carboxyvinyl)-3-phosphoshikimate + phosphate. Its pathway is metabolic intermediate biosynthesis; chorismate biosynthesis; chorismate from D-erythrose 4-phosphate and phosphoenolpyruvate: step 6/7. Catalyzes the transfer of the enolpyruvyl moiety of phosphoenolpyruvate (PEP) to the 5-hydroxyl of shikimate-3-phosphate (S3P) to produce enolpyruvyl shikimate-3-phosphate and inorganic phosphate. This is 3-phosphoshikimate 1-carboxyvinyltransferase from Caldicellulosiruptor bescii (strain ATCC BAA-1888 / DSM 6725 / KCTC 15123 / Z-1320) (Anaerocellum thermophilum).